A 217-amino-acid polypeptide reads, in one-letter code: Peptide methionine sulfoxide reductase MsrA (217 aa).

Positions glutamate 16–isoleucine 39 are disordered. Residue cysteine 56 is part of the active site.

The protein belongs to the MsrA Met sulfoxide reductase family.

It carries out the reaction L-methionyl-[protein] + [thioredoxin]-disulfide + H2O = L-methionyl-(S)-S-oxide-[protein] + [thioredoxin]-dithiol. The catalysed reaction is [thioredoxin]-disulfide + L-methionine + H2O = L-methionine (S)-S-oxide + [thioredoxin]-dithiol. In terms of biological role, has an important function as a repair enzyme for proteins that have been inactivated by oxidation. Catalyzes the reversible oxidation-reduction of methionine sulfoxide in proteins to methionine. This chain is Peptide methionine sulfoxide reductase MsrA, found in Corynebacterium efficiens (strain DSM 44549 / YS-314 / AJ 12310 / JCM 11189 / NBRC 100395).